We begin with the raw amino-acid sequence, 153 residues long: Small ribosomal subunit protein uS13 (153 aa).

Belongs to the universal ribosomal protein uS13 family.

Its subcellular location is the cytoplasm. Its function is as follows. Located at the top of the head of the 40S subunit, it contacts several helices of the 18S rRNA. In Chlamydomonas reinhardtii (Chlamydomonas smithii), this protein is Small ribosomal subunit protein uS13 (RPS18).